Reading from the N-terminus, the 550-residue chain is Hydroxylamine reductase (550 aa).

Residues Cys3, Cys6, Cys18, and Cys25 each contribute to the [2Fe-2S] cluster site. Positions 249, 273, 317, 405, 433, 458, 492, and 494 each coordinate hybrid [4Fe-2O-2S] cluster. Cys405 carries the cysteine persulfide modification.

It belongs to the HCP family. Requires [2Fe-2S] cluster as cofactor. The cofactor is hybrid [4Fe-2O-2S] cluster.

Its subcellular location is the cytoplasm. It carries out the reaction A + NH4(+) + H2O = hydroxylamine + AH2 + H(+). In terms of biological role, catalyzes the reduction of hydroxylamine to form NH(3) and H(2)O. In Salmonella dublin (strain CT_02021853), this protein is Hydroxylamine reductase.